The sequence spans 549 residues: Glucose-6-phosphate isomerase (549 aa).

Glu-355 acts as the Proton donor in catalysis. Active-site residues include His-387 and Lys-515.

This sequence belongs to the GPI family.

The protein localises to the cytoplasm. The enzyme catalyses alpha-D-glucose 6-phosphate = beta-D-fructose 6-phosphate. It functions in the pathway carbohydrate biosynthesis; gluconeogenesis. It participates in carbohydrate degradation; glycolysis; D-glyceraldehyde 3-phosphate and glycerone phosphate from D-glucose: step 2/4. Functionally, catalyzes the reversible isomerization of glucose-6-phosphate to fructose-6-phosphate. The polypeptide is Glucose-6-phosphate isomerase (Mannheimia succiniciproducens (strain KCTC 0769BP / MBEL55E)).